An 86-amino-acid chain; its full sequence is Ferredoxin YfhL (86 aa).

4Fe-4S ferredoxin-type domains are found at residues 1–29 and 31–65; these read MALLITKKCINCDMCEPECPNEAISMGDH and YEINSDKCTECVGHYETPTCQKVCPIPNTIVKDPA. Positions 9, 12, 15, 19, 38, 41, 50, and 54 each coordinate [4Fe-4S] cluster.

[4Fe-4S] cluster serves as cofactor.

In terms of biological role, ferredoxins are iron-sulfur proteins that transfer electrons in a wide variety of metabolic reactions. This Escherichia coli (strain K12) protein is Ferredoxin YfhL (yfhL).